The sequence spans 435 residues: Transcription activator AKTR-2 (435 aa).

The zn(2)-C6 fungal-type DNA-binding region spans 16–43 (CDFCTQSKLRCNKNKPSCRRCTIQQQVC). Positions 49–103 (RRTGRPPKHPRRADDSQETSGQHGHQDPMTSAPADSCEQQSSHLDLEGDDTDFTL) are disordered. Residues 50 to 59 (RTGRPPKHPR) show a composition bias toward basic residues.

Its subcellular location is the nucleus. Its function is as follows. Transcription factor that regulates the expression of the gene clusters that mediate the biosynthesis of the host-selective toxins (HSTs) AK-toxins responsible for Japanese pear black spot disease by the Japanese pear pathotype. AK-toxins are esters of 9,10-epoxy 8-hydroxy 9-methyldecatrienoic acid (EDA). On cellular level, AK-toxins affect plasma membrane of susceptible cells and cause a sudden increase in loss of K(+) after a few minutes of toxin treatment. The protein is Transcription activator AKTR-2 of Alternaria alternata (Alternaria rot fungus).